The following is a 288-amino-acid chain: Homoserine kinase (288 aa).

78–88 provides a ligand contact to ATP; it reads PLARGLGSSSS.

Belongs to the GHMP kinase family. Homoserine kinase subfamily.

Its subcellular location is the cytoplasm. The catalysed reaction is L-homoserine + ATP = O-phospho-L-homoserine + ADP + H(+). The protein operates within amino-acid biosynthesis; L-threonine biosynthesis; L-threonine from L-aspartate: step 4/5. In terms of biological role, catalyzes the ATP-dependent phosphorylation of L-homoserine to L-homoserine phosphate. This Streptococcus agalactiae serotype V (strain ATCC BAA-611 / 2603 V/R) protein is Homoserine kinase.